The chain runs to 106 residues: Nucleoid-associated protein RPB_0667 (106 aa).

The protein belongs to the YbaB/EbfC family. In terms of assembly, homodimer.

It is found in the cytoplasm. Its subcellular location is the nucleoid. Functionally, binds to DNA and alters its conformation. May be involved in regulation of gene expression, nucleoid organization and DNA protection. The polypeptide is Nucleoid-associated protein RPB_0667 (Rhodopseudomonas palustris (strain HaA2)).